A 29-amino-acid polypeptide reads, in one-letter code: Cyclotide mra2 (29 aa).

Cystine bridges form between cysteine 4-cysteine 19, cysteine 8-cysteine 21, and cysteine 13-cysteine 26.

Post-translationally, this is a cyclic peptide. In terms of processing, contains 3 disulfide bonds.

Functionally, probably participates in a plant defense mechanism. In Melicytus ramiflorus (Whitey wood), this protein is Cyclotide mra2.